The chain runs to 63 residues: MGAGTAPKGKRNRTPTHIRCRRCGRRAFNVKKGYCAACGFGRSRRMRKYSWSHKWRKKRNLSY.

Cys20, Cys23, Cys35, and Cys38 together coordinate Zn(2+). The C4-type zinc finger occupies 20–38; sequence CRRCGRRAFNVKKGYCAAC.

The protein belongs to the eukaryotic ribosomal protein eL37 family. In terms of assembly, part of the 50S ribosomal subunit. Zn(2+) is required as a cofactor.

Its function is as follows. Binds to the 23S rRNA. The polypeptide is Large ribosomal subunit protein eL37 (Thermococcus kodakarensis (strain ATCC BAA-918 / JCM 12380 / KOD1) (Pyrococcus kodakaraensis (strain KOD1))).